The primary structure comprises 448 residues: Asparagine--tRNA ligase (448 aa).

It belongs to the class-II aminoacyl-tRNA synthetase family. In terms of assembly, homodimer.

The protein resides in the cytoplasm. The catalysed reaction is tRNA(Asn) + L-asparagine + ATP = L-asparaginyl-tRNA(Asn) + AMP + diphosphate + H(+). The chain is Asparagine--tRNA ligase from Streptococcus pyogenes serotype M2 (strain MGAS10270).